Here is a 76-residue protein sequence, read N- to C-terminus: uncharacterized protein (76 aa).

This is an uncharacterized protein from Homo sapiens (Human).